The primary structure comprises 294 residues: Cytidine deaminase (294 aa).

CMP/dCMP-type deaminase domains follow at residues 49–169 and 188–294; these read TPQQ…FGPA and ETQD…YIAL. Residue 90–92 coordinates substrate; it reads NLE. H103 contributes to the Zn(2+) binding site. Residue E105 is the Proton donor of the active site. Residues C130 and C133 each contribute to the Zn(2+) site.

This sequence belongs to the cytidine and deoxycytidylate deaminase family. Homodimer. Zn(2+) serves as cofactor.

The catalysed reaction is cytidine + H2O + H(+) = uridine + NH4(+). The enzyme catalyses 2'-deoxycytidine + H2O + H(+) = 2'-deoxyuridine + NH4(+). In terms of biological role, this enzyme scavenges exogenous and endogenous cytidine and 2'-deoxycytidine for UMP synthesis. This chain is Cytidine deaminase, found in Pasteurella multocida (strain Pm70).